The following is a 249-amino-acid chain: 4-hydroxy-tetrahydrodipicolinate reductase (249 aa).

NAD(+) contacts are provided by residues 8–13, 87–89, and 111–114; these read GVTGQM, GTT, and ATNF. His143 acts as the Proton donor/acceptor in catalysis. His144 is a binding site for (S)-2,3,4,5-tetrahydrodipicolinate. The active-site Proton donor is Lys147. 153–154 lines the (S)-2,3,4,5-tetrahydrodipicolinate pocket; sequence GT.

It belongs to the DapB family.

The protein resides in the cytoplasm. The catalysed reaction is (S)-2,3,4,5-tetrahydrodipicolinate + NAD(+) + H2O = (2S,4S)-4-hydroxy-2,3,4,5-tetrahydrodipicolinate + NADH + H(+). It catalyses the reaction (S)-2,3,4,5-tetrahydrodipicolinate + NADP(+) + H2O = (2S,4S)-4-hydroxy-2,3,4,5-tetrahydrodipicolinate + NADPH + H(+). The protein operates within amino-acid biosynthesis; L-lysine biosynthesis via DAP pathway; (S)-tetrahydrodipicolinate from L-aspartate: step 4/4. Its function is as follows. Catalyzes the conversion of 4-hydroxy-tetrahydrodipicolinate (HTPA) to tetrahydrodipicolinate. This Haloarcula marismortui (strain ATCC 43049 / DSM 3752 / JCM 8966 / VKM B-1809) (Halobacterium marismortui) protein is 4-hydroxy-tetrahydrodipicolinate reductase.